The chain runs to 406 residues: 1H-pyrrole-2-carbonyl-[peptidyl-carrier protein] brominase (406 aa).

10 residues coordinate FAD: Ala-17, Glu-36, Arg-42, His-44, Ile-45, Ser-48, Arg-101, Val-124, Asp-291, and Val-304.

It belongs to the flavin-dependent halogenase family.

It carries out the reaction (1H-pyrrole-2-carbonyl)-[peptidyl-carrier protein] + 3 bromide + 3 FADH2 + 3 O2 = (3,4,5-tribromo-1H-pyrrole-2-carbonyl)-[peptidyl-carrier protein] + 3 FAD + 6 H2O. It catalyses the reaction (1H-pyrrole-2-carbonyl)-[peptidyl-carrier protein] + bromide + FADH2 + O2 = (5-bromo-1H-pyrrole-2-carbonyl)-[peptidyl-carrier protein] + FAD + 2 H2O. The enzyme catalyses (5-bromo-1H-pyrrole-2-carbonyl)-[peptidyl-carrier protein] + bromide + FADH2 + O2 = (4,5-dibromo-1H-pyrrole-2-carbonyl)-[peptidyl-carrier protein] + FAD + 2 H2O. The catalysed reaction is (4,5-dibromo-1H-pyrrole-2-carbonyl)-[peptidyl-carrier protein] + bromide + FADH2 + O2 = (3,4,5-tribromo-1H-pyrrole-2-carbonyl)-[peptidyl-carrier protein] + FAD + 2 H2O. Brominase involved in the biosynthesis of polybrominated aromatic organic compounds. Catalyzes three successive rounds of bromination of pyrrolyl-S-Bmp1 to produce mono-, di- and tribromopyrrolyl-S-Bmp1. This chain is 1H-pyrrole-2-carbonyl-[peptidyl-carrier protein] brominase, found in Pseudoalteromonas luteoviolacea (strain 2ta16).